A 282-amino-acid chain; its full sequence is Protoheme IX farnesyltransferase (282 aa).

A run of 8 helical transmembrane segments spans residues 40–60 (LVLA…FNMV), 87–107 (AVLA…AVNP), 108–128 (YVFV…TVLL), 135–157 (SVVF…ATGG), 162–184 (GVLL…STYY), 204–224 (AGVV…FLAF), 228–248 (LISA…VAVL), and 261–281 (AYRA…LLVL).

This sequence belongs to the UbiA prenyltransferase family. Protoheme IX farnesyltransferase subfamily.

It is found in the cell membrane. The catalysed reaction is heme b + (2E,6E)-farnesyl diphosphate + H2O = Fe(II)-heme o + diphosphate. Its pathway is porphyrin-containing compound metabolism; heme O biosynthesis; heme O from protoheme: step 1/1. In terms of biological role, converts heme B (protoheme IX) to heme O by substitution of the vinyl group on carbon 2 of heme B porphyrin ring with a hydroxyethyl farnesyl side group. The chain is Protoheme IX farnesyltransferase from Thermofilum pendens (strain DSM 2475 / Hrk 5).